A 201-amino-acid chain; its full sequence is FMN-dependent NADH:quinone oxidoreductase (201 aa).

FMN-binding positions include Ser-10, 16-18, 96-99, and 140-143; these read SQS, MYNF, and SRGG.

Belongs to the azoreductase type 1 family. In terms of assembly, homodimer. FMN is required as a cofactor.

The catalysed reaction is 2 a quinone + NADH + H(+) = 2 a 1,4-benzosemiquinone + NAD(+). It carries out the reaction N,N-dimethyl-1,4-phenylenediamine + anthranilate + 2 NAD(+) = 2-(4-dimethylaminophenyl)diazenylbenzoate + 2 NADH + 2 H(+). In terms of biological role, quinone reductase that provides resistance to thiol-specific stress caused by electrophilic quinones. Functionally, also exhibits azoreductase activity. Catalyzes the reductive cleavage of the azo bond in aromatic azo compounds to the corresponding amines. The chain is FMN-dependent NADH:quinone oxidoreductase from Cronobacter sakazakii (strain ATCC BAA-894) (Enterobacter sakazakii).